A 228-amino-acid polypeptide reads, in one-letter code: Cytochrome c oxidase subunit 2 (228 aa).

Residues 1–26 (MATWANLGLQNSSSPLMEQLNFFHDH) lie on the Mitochondrial intermembrane side of the membrane. Residues 27–48 (TLLILIMITVMIAYIMFMLFFN) traverse the membrane as a helical segment. Residues 49–62 (KFTNRYLLHGQTIE) lie on the Mitochondrial matrix side of the membrane. Residues 63-82 (IIWTILPAIILMFIAFPSLR) form a helical membrane-spanning segment. Over 83–228 (LLYLMDEINS…FIKWISSQMN (146 aa)) the chain is Mitochondrial intermembrane. Positions 161, 196, 198, 200, 204, and 207 each coordinate Cu cation. Glutamate 198 provides a ligand contact to Mg(2+).

This sequence belongs to the cytochrome c oxidase subunit 2 family. As to quaternary structure, component of the cytochrome c oxidase (complex IV, CIV), a multisubunit enzyme composed of a catalytic core of 3 subunits and several supernumerary subunits. The complex exists as a monomer or a dimer and forms supercomplexes (SCs) in the inner mitochondrial membrane with ubiquinol-cytochrome c oxidoreductase (cytochrome b-c1 complex, complex III, CIII). Cu cation serves as cofactor.

It localises to the mitochondrion inner membrane. It catalyses the reaction 4 Fe(II)-[cytochrome c] + O2 + 8 H(+)(in) = 4 Fe(III)-[cytochrome c] + 2 H2O + 4 H(+)(out). Functionally, component of the cytochrome c oxidase, the last enzyme in the mitochondrial electron transport chain which drives oxidative phosphorylation. The respiratory chain contains 3 multisubunit complexes succinate dehydrogenase (complex II, CII), ubiquinol-cytochrome c oxidoreductase (cytochrome b-c1 complex, complex III, CIII) and cytochrome c oxidase (complex IV, CIV), that cooperate to transfer electrons derived from NADH and succinate to molecular oxygen, creating an electrochemical gradient over the inner membrane that drives transmembrane transport and the ATP synthase. Cytochrome c oxidase is the component of the respiratory chain that catalyzes the reduction of oxygen to water. Electrons originating from reduced cytochrome c in the intermembrane space (IMS) are transferred via the dinuclear copper A center (CU(A)) of subunit 2 and heme A of subunit 1 to the active site in subunit 1, a binuclear center (BNC) formed by heme A3 and copper B (CU(B)). The BNC reduces molecular oxygen to 2 water molecules using 4 electrons from cytochrome c in the IMS and 4 protons from the mitochondrial matrix. The chain is Cytochrome c oxidase subunit 2 (COII) from Aedes aegypti (Yellowfever mosquito).